A 712-amino-acid polypeptide reads, in one-letter code: Glycine--tRNA ligase beta subunit (712 aa).

This sequence belongs to the class-II aminoacyl-tRNA synthetase family. In terms of assembly, tetramer of two alpha and two beta subunits.

It localises to the cytoplasm. It catalyses the reaction tRNA(Gly) + glycine + ATP = glycyl-tRNA(Gly) + AMP + diphosphate. This chain is Glycine--tRNA ligase beta subunit, found in Acaryochloris marina (strain MBIC 11017).